Reading from the N-terminus, the 222-residue chain is Protein SHI RELATED SEQUENCE 4 (222 aa).

6 residues coordinate Zn(2+): Cys-72, Cys-75, Cys-83, Cys-88, Cys-92, and Cys-99. Residues 72 to 99 constitute a DNA-binding region (zn(2)-C6 fungal-type; degenerate); sequence CQECGNQAKKGCTHGRCRTCCKSNGLHC. The interval 114–137 is disordered; the sequence is RERQQQLQTPTSNPTGGSGRVGKY. Positions 118–128 are enriched in polar residues; it reads QQLQTPTSNPT. A Required for homo- and heterodimerization motif is present at residues 191-194; sequence IAGH.

The protein belongs to the SHI protein family. Expressed in cotyledon tips, leaf primordia, hydathodes, stipules, and lateral root primordia and weakly at the edges of petals and sepals.

Its subcellular location is the nucleus. Transcription activator that binds DNA on 5'-ACTCTAC-3' and promotes auxin homeostasis-regulating gene expression (e.g. YUC genes), as well as genes affecting stamen development, cell expansion and timing of flowering. Synergistically with other SHI-related proteins, regulates gynoecium, stamen and leaf development in a dose-dependent manner, controlling apical-basal patterning. Promotes style and stigma formation, and influences vascular development during gynoecium development. May also have a role in the formation and/or maintenance of the shoot apical meristem (SAM). The chain is Protein SHI RELATED SEQUENCE 4 (SRS4) from Arabidopsis thaliana (Mouse-ear cress).